The following is a 357-amino-acid chain: Transcription factor PCF6 (357 aa).

Residues methionine 1–methionine 29 form a disordered region. Over residues aspartate 7 to glycine 16 the composition is skewed to gly residues. A TCP domain is found at glycine 52 to leucine 110. Disordered stretches follow at residues alanine 125–valine 162 and alanine 281–glutamine 307. 2 stretches are compositionally biased toward polar residues: residues leucine 142–serine 155 and glycine 284–serine 295.

As to quaternary structure, forms homodimers and heterodimers.

The protein resides in the nucleus. Functionally, transcription activator. Binds the promoter core sequence 5'-GGNCC-3'. This chain is Transcription factor PCF6 (PCF6), found in Oryza sativa subsp. japonica (Rice).